The chain runs to 565 residues: MKIPEEEVALLEDYVSDSVDHRGFPAGKSSTGGWRSAWFIIGVEVAERFAYFGIACNLITYLTGPLGQSTAKAAVNVNTWSGTASILPILGAFVADAYLGRYRTIVVASLIYILGLGLLTLSASLIIMGLSKQRNDASAKPSIWVNTLFFCSLYLVAIGQGGHKPCVQAFGADQFDAEDPKEVIARGSFFNWWFLSLSAGISISIIVVAYVQENVNWAFGFGIPCLFMVMALAIFLLGRKIYRYPKGHHEEVNSSNTFARIGRVFVIAFKNRKLRLEHSSLELDQGLLEDGQSEKRKDRLNFLAKAMISREGVEPCSGRDVDDAKALVRLIPIWITYVVSTIPYAQYITFFTKQGVTVDRRILPGVEIPAASLLSFVGVSILISVPLYERVFLPIARKITKKPFGITMLQRIGAGMVLSVFNMMLAALVESKRLKIAREHGLVDKPDVTVPMSIWWFVPQYLLLGMIDLFSMVGTQEFFYDQVPTELRSIGLSLSLSAMGLSSFLSGFLISLIDWATGKDGWFNSNLNRAHVDYFYWLLAAFTAIAFFAFLFISKMYVYRRLDQV.

The next 2 helical transmembrane spans lie at 49–67 (FAYF…GPLG) and 80–100 (WSGT…AYLG). Phosphothreonine is present on threonine 104. 10 consecutive transmembrane segments (helical) span residues 110–130 (LIYI…IMGL), 142–162 (SIWV…GQGG), 189–209 (FFNW…IVVA), 217–237 (WAFG…IFLL), 331–351 (IPIW…ITFF), 368–388 (IPAA…VPLY), 409–429 (LQRI…AALV), 454–474 (IWWF…SMVG), 490–510 (IGLS…GFLI), and 534–554 (YFYW…LFIS).

This sequence belongs to the major facilitator superfamily. Proton-dependent oligopeptide transporter (POT/PTR) (TC 2.A.17) family. Expressed in shoots, roots and leaves.

It is found in the membrane. This chain is Protein NRT1/ PTR FAMILY 5.15 (NPF5.15), found in Arabidopsis thaliana (Mouse-ear cress).